We begin with the raw amino-acid sequence, 190 residues long: Guanylate kinase (190 aa).

Residues 8–188 enclose the Guanylate kinase-like domain; sequence GRLVILAGPS…AVKAIEDVLL (181 aa). Position 15–22 (15–22) interacts with ATP; it reads GPSAVGKS.

This sequence belongs to the guanylate kinase family.

Its subcellular location is the cytoplasm. It carries out the reaction GMP + ATP = GDP + ADP. In terms of biological role, essential for recycling GMP and indirectly, cGMP. The sequence is that of Guanylate kinase from Corynebacterium glutamicum (strain ATCC 13032 / DSM 20300 / JCM 1318 / BCRC 11384 / CCUG 27702 / LMG 3730 / NBRC 12168 / NCIMB 10025 / NRRL B-2784 / 534).